Here is a 576-residue protein sequence, read N- to C-terminus: Putative SPbeta prophage-derived single-strand DNA-specific exonuclease YorK (576 aa).

Y473 is subject to Phosphotyrosine.

This sequence belongs to the RecJ family.

In terms of biological role, putative single-stranded-DNA-specific exonuclease. The sequence is that of Putative SPbeta prophage-derived single-strand DNA-specific exonuclease YorK (yorK) from Bacillus subtilis (strain 168).